We begin with the raw amino-acid sequence, 104 residues long: MQSGKNAAASAKETAANVAASAKAGMEKTKASLQEKGEKMTAHDPMQKEMAREKKEERKHEAEYEKQAAKEHNAAQKQTTGIGTGTHSYTTTNVTGHRTGTGGI.

Residues 1 to 24 (MQSGKNAAASAKETAANVAASAKA) show a composition bias toward low complexity. The interval 1 to 104 (MQSGKNAAAS…TGHRTGTGGI (104 aa)) is disordered. The span at 25-74 (GMEKTKASLQEKGEKMTAHDPMQKEMAREKKEERKHEAEYEKQAAKEHNA) shows a compositional bias: basic and acidic residues. Positions 75–89 (AQKQTTGIGTGTHSY) are enriched in polar residues.

The protein belongs to the LEA type 1 family. As to expression, maximally expressed in dry seeds. Also present in mid-maturation embryos.

Its function is as follows. LEA proteins are late embryonic proteins abundant in higher plant seed embryos. They may play an essential role in seed survival and in controlling water exchanges during seed desiccation and imbibition. The chain is 11 kDa late embryogenesis abundant protein from Helianthus annuus (Common sunflower).